A 231-amino-acid chain; its full sequence is MSPKKKAVVLLSGGLDSATTMAIAKAENYELYALTFQYGQRHAVELEAARRIAAALGAKEHLFISIDLRIIGGSALTGPFEVPKKQEGEETSAEIPVTYVPARNTIFLSYALAWAEVLQISEIFIGVNAVDYSGYPDCRPEYITAFEAMANLAIKAAVEGTMRVKIRTPLIDLSKADIIRKGMALSVDYGLTHSCYDPLPDGKPCGQCDSCHLRRKGFREAGFDDPAFSET.

11–21 (LSGGLDSATTM) is an ATP binding site. Zn(2+)-binding residues include Cys195, Cys205, Cys208, and Cys211.

This sequence belongs to the QueC family. Requires Zn(2+) as cofactor.

It carries out the reaction 7-carboxy-7-deazaguanine + NH4(+) + ATP = 7-cyano-7-deazaguanine + ADP + phosphate + H2O + H(+). It functions in the pathway purine metabolism; 7-cyano-7-deazaguanine biosynthesis. Functionally, catalyzes the ATP-dependent conversion of 7-carboxy-7-deazaguanine (CDG) to 7-cyano-7-deazaguanine (preQ(0)). This is 7-cyano-7-deazaguanine synthase from Syntrophus aciditrophicus (strain SB).